A 302-amino-acid chain; its full sequence is MEKMSKFSHLLKAHPCFNEKVHDKYGRVHLPVAPRCNIACKFCKRSVSKECCEHRPGVSLGVLKPEDVEDYLKKILKEMPNIKVVGIAGPGDSLFNKETFETLKIIDEKFPNLIKCISTNGLLLSKYYKDLANLNVRTITVTVNAIKPEILEKIVDWVYYDKKLYRGLEGAKLLIEKQIEGIKKASEEDFIIKINTVLIPEINMDHVVEIAKFFKDYAYVQNIIPLIPQYKMKELRAPTCEEIKKVRKECEKYIPQFRACGQCRADAVGLIKEKELLKEFFKEKNKEKNIKLEVFDLKHFSH.

Residues 22–264 (HDKYGRVHLP…PQFRACGQCR (243 aa)) form the Radical SAM core domain. Cys36, Cys40, and Cys43 together coordinate [4Fe-4S] cluster. 3 residues coordinate S-adenosyl-L-methionine: Gly91, Thr142, and Ile194. Residues Cys260 and Cys263 each contribute to the [4Fe-4S] cluster site.

This sequence belongs to the radical SAM superfamily. NifB family. Monomer. [4Fe-4S] cluster serves as cofactor.

The protein operates within cofactor biosynthesis; Fe-Mo cofactor biosynthesis. Functionally, involved in the biosynthesis of the iron-molybdenum cofactor (FeMo-co or M-cluster) found in the dinitrogenase enzyme of the nitrogenase complex in nitrogen-fixing microorganisms. NifB catalyzes the crucial step of radical SAM-dependent carbide insertion that occurs concomitant with the insertion of a 9th sulfur and the rearrangement/coupling of two [4Fe-4S] clusters into a [8Fe-9S-C] cluster, the precursor to the M-cluster. In Methanocaldococcus infernus (strain DSM 11812 / JCM 15783 / ME), this protein is FeMo cofactor biosynthesis protein NifB.